The following is a 430-amino-acid chain: Enolase (430 aa).

Gln-163 is a binding site for (2R)-2-phosphoglycerate. Glu-205 functions as the Proton donor in the catalytic mechanism. Mg(2+) contacts are provided by Asp-242, Glu-287, and Asp-314. Lys-339, Arg-368, Ser-369, and Lys-390 together coordinate (2R)-2-phosphoglycerate. Residue Lys-339 is the Proton acceptor of the active site.

Belongs to the enolase family. Mg(2+) serves as cofactor.

It is found in the cytoplasm. It localises to the secreted. Its subcellular location is the cell surface. The enzyme catalyses (2R)-2-phosphoglycerate = phosphoenolpyruvate + H2O. It functions in the pathway carbohydrate degradation; glycolysis; pyruvate from D-glyceraldehyde 3-phosphate: step 4/5. In terms of biological role, catalyzes the reversible conversion of 2-phosphoglycerate (2-PG) into phosphoenolpyruvate (PEP). It is essential for the degradation of carbohydrates via glycolysis. This Bacillus cytotoxicus (strain DSM 22905 / CIP 110041 / 391-98 / NVH 391-98) protein is Enolase.